We begin with the raw amino-acid sequence, 318 residues long: Probable carboxylesterase 1 (318 aa).

The residue at position 1 (methionine 1) is an N-acetylmethionine. Residues 79-81 (HGG) carry the Involved in the stabilization of the negatively charged intermediate by the formation of the oxyanion hole motif. Active-site residues include serine 163, aspartate 258, and histidine 290.

This sequence belongs to the 'GDXG' lipolytic enzyme family. As to expression, expressed in roots, stems, flowers and siliques.

The enzyme catalyses a carboxylic ester + H2O = an alcohol + a carboxylate + H(+). In terms of biological role, carboxylesterase acting on esters with varying acyl chain length. The protein is Probable carboxylesterase 1 (CXE1) of Arabidopsis thaliana (Mouse-ear cress).